The chain runs to 271 residues: 4-hydroxy-tetrahydrodipicolinate reductase (271 aa).

NAD(+) is bound by residues 10 to 15 (GAGGRM), Glu-36, 100 to 102 (GTT), and 124 to 127 (SGNM). The active-site Proton donor/acceptor is His-157. Residue His-158 participates in (S)-2,3,4,5-tetrahydrodipicolinate binding. Catalysis depends on Lys-161, which acts as the Proton donor. (S)-2,3,4,5-tetrahydrodipicolinate is bound at residue 167 to 168 (GT).

The protein belongs to the DapB family.

It is found in the cytoplasm. It carries out the reaction (S)-2,3,4,5-tetrahydrodipicolinate + NAD(+) + H2O = (2S,4S)-4-hydroxy-2,3,4,5-tetrahydrodipicolinate + NADH + H(+). The enzyme catalyses (S)-2,3,4,5-tetrahydrodipicolinate + NADP(+) + H2O = (2S,4S)-4-hydroxy-2,3,4,5-tetrahydrodipicolinate + NADPH + H(+). The protein operates within amino-acid biosynthesis; L-lysine biosynthesis via DAP pathway; (S)-tetrahydrodipicolinate from L-aspartate: step 4/4. In terms of biological role, catalyzes the conversion of 4-hydroxy-tetrahydrodipicolinate (HTPA) to tetrahydrodipicolinate. The sequence is that of 4-hydroxy-tetrahydrodipicolinate reductase from Rhodopseudomonas palustris (strain HaA2).